A 55-amino-acid chain; its full sequence is Large ribosomal subunit protein bL33 (55 aa).

The span at 1-11 (MAKGGREKIKL) shows a compositional bias: basic and acidic residues. Residues 1-26 (MAKGGREKIKLESTAGTGHFYTTDKN) are disordered.

Belongs to the bacterial ribosomal protein bL33 family.

In Methylibium petroleiphilum (strain ATCC BAA-1232 / LMG 22953 / PM1), this protein is Large ribosomal subunit protein bL33.